Reading from the N-terminus, the 322-residue chain is Endochitinase CH25 (322 aa).

The N-terminal stretch at 1 to 20 (MKSCLLLFLIFSFLLSFSLA) is a signal peptide. A Chitin-binding type-1 domain is found at 21 to 62 (EQCGRQAGGALCPNGLCCSEFGWCGDTEAYCKQPGCQSQCGG). 7 cysteine pairs are disulfide-bonded: Cys23/Cys38, Cys32/Cys44, Cys37/Cys51, Cys56/Cys60, Cys92/Cys154, Cys166/Cys174, and Cys273/Cys305. Residue Glu136 is the Proton donor of the active site.

Belongs to the glycosyl hydrolase 19 family. Chitinase class I subfamily. High expression in roots, moderate in floral tissues and low in stems and leaves.

The catalysed reaction is Random endo-hydrolysis of N-acetyl-beta-D-glucosaminide (1-&gt;4)-beta-linkages in chitin and chitodextrins.. In Brassica napus (Rape), this protein is Endochitinase CH25.